A 180-amino-acid chain; its full sequence is NADH-quinone oxidoreductase subunit I (180 aa).

2 4Fe-4S ferredoxin-type domains span residues leucine 50–alanine 80 and glutamate 90–aspartate 119. Positions 60, 63, 66, 70, 99, 102, 105, and 109 each coordinate [4Fe-4S] cluster.

Belongs to the complex I 23 kDa subunit family. As to quaternary structure, NDH-1 is composed of 13 different subunits. Subunits NuoA, H, J, K, L, M, N constitute the membrane sector of the complex. It depends on [4Fe-4S] cluster as a cofactor.

The protein resides in the cell inner membrane. The enzyme catalyses a quinone + NADH + 5 H(+)(in) = a quinol + NAD(+) + 4 H(+)(out). In terms of biological role, NDH-1 shuttles electrons from NADH, via FMN and iron-sulfur (Fe-S) centers, to quinones in the respiratory chain. The immediate electron acceptor for the enzyme in this species is believed to be ubiquinone. Couples the redox reaction to proton translocation (for every two electrons transferred, four hydrogen ions are translocated across the cytoplasmic membrane), and thus conserves the redox energy in a proton gradient. The sequence is that of NADH-quinone oxidoreductase subunit I from Shigella sonnei (strain Ss046).